We begin with the raw amino-acid sequence, 337 residues long: Tryptophan--tRNA ligase (337 aa).

Residues 9–11 and 17–18 each bind ATP; these read RPT and GH. A 'HIGH' region motif is present at residues 10 to 18; sequence PTGRLHLGH. Residue D137 participates in L-tryptophan binding. Residues 149–151, L187, and 195–199 each bind ATP; these read GKD and KMSKS. The short motif at 195–199 is the 'KMSKS' region element; it reads KMSKS.

Belongs to the class-I aminoacyl-tRNA synthetase family. Homodimer.

It is found in the cytoplasm. It catalyses the reaction tRNA(Trp) + L-tryptophan + ATP = L-tryptophyl-tRNA(Trp) + AMP + diphosphate + H(+). Its function is as follows. Catalyzes the attachment of tryptophan to tRNA(Trp). In Treponema pallidum (strain Nichols), this protein is Tryptophan--tRNA ligase.